The chain runs to 223 residues: Ribonuclease T (223 aa).

An Exonuclease domain is found at 20-194 (VVIDVETAGF…YDTERTAELF (175 aa)). Mg(2+) is bound by residues aspartate 23, glutamate 25, histidine 181, and aspartate 186. The Proton donor/acceptor role is filled by histidine 181.

It belongs to the RNase T family. As to quaternary structure, homodimer. The cofactor is Mg(2+).

In terms of biological role, trims short 3' overhangs of a variety of RNA species, leaving a one or two nucleotide 3' overhang. Responsible for the end-turnover of tRNA: specifically removes the terminal AMP residue from uncharged tRNA (tRNA-C-C-A). Also appears to be involved in tRNA biosynthesis. The protein is Ribonuclease T of Shewanella baltica (strain OS185).